The chain runs to 3165 residues: Protein eyes shut homolog (3165 aa).

Positions methionine 1–glycine 21 are cleaved as a signal peptide. Asparagine 166 carries an N-linked (GlcNAc...) asparagine glycan. EGF-like domains lie at lysine 170 to glutamine 212, glutamate 213 to serine 254, and isoleucine 256 to glutamate 292. Intrachain disulfides connect cysteine 174/cysteine 189, cysteine 183/cysteine 200, cysteine 202/cysteine 211, cysteine 217/cysteine 228, cysteine 222/cysteine 242, cysteine 244/cysteine 253, cysteine 260/cysteine 270, cysteine 265/cysteine 280, and cysteine 282/cysteine 291. N-linked (GlcNAc...) asparagine glycosylation is found at asparagine 269 and asparagine 272. 2 N-linked (GlcNAc...) asparagine glycosylation sites follow: asparagine 311 and asparagine 343. 2 consecutive EGF-like domains span residues aspartate 332–lysine 368 and isoleucine 370–glutamate 406. 4 disulfides stabilise this stretch: cysteine 341/cysteine 356, cysteine 358/cysteine 367, cysteine 374/cysteine 385, and cysteine 396/cysteine 405. 2 N-linked (GlcNAc...) asparagine glycosylation sites follow: asparagine 506 and asparagine 566. 2 consecutive EGF-like domains span residues threonine 567–valine 602 and aspartate 643–glutamate 679. Intrachain disulfides connect cysteine 575–cysteine 590, cysteine 592–cysteine 601, cysteine 669–cysteine 678, cysteine 685–cysteine 696, cysteine 690–cysteine 705, cysteine 707–cysteine 719, cysteine 737–cysteine 748, cysteine 742–cysteine 757, cysteine 759–cysteine 768, cysteine 775–cysteine 786, cysteine 780–cysteine 795, cysteine 797–cysteine 806, cysteine 813–cysteine 824, cysteine 818–cysteine 835, cysteine 837–cysteine 846, cysteine 853–cysteine 866, cysteine 860–cysteine 876, cysteine 878–cysteine 887, cysteine 894–cysteine 905, cysteine 899–cysteine 914, cysteine 916–cysteine 925, cysteine 932–cysteine 943, cysteine 937–cysteine 952, cysteine 954–cysteine 963, cysteine 970–cysteine 981, cysteine 975–cysteine 990, cysteine 992–cysteine 1001, cysteine 1008–cysteine 1019, cysteine 1013–cysteine 1028, cysteine 1030–cysteine 1039, cysteine 1046–cysteine 1056, cysteine 1051–cysteine 1065, cysteine 1067–cysteine 1076, cysteine 1083–cysteine 1094, cysteine 1088–cysteine 1103, cysteine 1105–cysteine 1114, cysteine 1121–cysteine 1137, cysteine 1131–cysteine 1147, cysteine 1149–cysteine 1158, cysteine 1165–cysteine 1176, cysteine 1170–cysteine 1185, cysteine 1187–cysteine 1196, cysteine 2037–cysteine 2063, cysteine 2103–cysteine 2114, cysteine 2108–cysteine 2128, and cysteine 2130–cysteine 2139. One can recognise an EGF-like 8; calcium-binding domain in the interval aspartate 681–leucine 720. The 37-residue stretch at aspartate 733 to glutamate 769 folds into the EGF-like 9; calcium-binding domain. In terms of domain architecture, EGF-like 10; calcium-binding spans glutamate 771–serine 807. EGF-like domains follow at residues glutamate 809–histidine 847, arginine 849–glutamate 888, and aspartate 890–glutamate 926. One can recognise an EGF-like 14; calcium-binding domain in the interval glutamate 928–glutamate 964. The region spanning aspartate 966 to glutamate 1002 is the EGF-like 15 domain. The EGF-like 16; calcium-binding domain occupies asparagine 1004–glutamate 1040. EGF-like domains lie at asparagine 1042–lysine 1077, lysine 1079–glutamate 1115, and serine 1117–glutamate 1159. The EGF-like 20; calcium-binding domain occupies asparagine 1161–glutamate 1197. The Laminin G-like 1 domain maps to phenylalanine 1883–cysteine 2063. In terms of domain architecture, EGF-like 21 spans alanine 2099–glutamate 2140. The 195-residue stretch at leucine 2145–cysteine 2339 folds into the Laminin G-like 2 domain. N-linked (GlcNAc...) asparagine glycosylation is present at asparagine 2170. 2 consecutive EGF-like domains span residues histidine 2335 to lysine 2368 and glutamine 2371 to threonine 2408. 19 disulfides stabilise this stretch: cysteine 2339–cysteine 2350, cysteine 2344–cysteine 2359, cysteine 2375–cysteine 2386, cysteine 2380–cysteine 2396, cysteine 2398–cysteine 2407, cysteine 2576–cysteine 2609, cysteine 2614–cysteine 2625, cysteine 2619–cysteine 2634, cysteine 2636–cysteine 2645, cysteine 2652–cysteine 2668, cysteine 2662–cysteine 2677, cysteine 2679–cysteine 2688, cysteine 2868–cysteine 2895, cysteine 2900–cysteine 2911, cysteine 2905–cysteine 2920, cysteine 2922–cysteine 2931, cysteine 2937–cysteine 2948, cysteine 2942–cysteine 2958, and cysteine 2960–cysteine 2969. The region spanning serine 2419–cysteine 2609 is the Laminin G-like 3 domain. 2 EGF-like domains span residues histidine 2610 to threonine 2646 and threonine 2648 to glutamate 2689. In terms of domain architecture, Laminin G-like 4 spans aspartate 2717–cysteine 2895. 2 EGF-like domains span residues aspartate 2896–asparagine 2932 and glutamine 2933–glutamate 2970. Residues phenylalanine 2975 to threonine 3165 form the Laminin G-like 5 domain.

It belongs to the EYS family. In terms of tissue distribution, expressed in retina (at protein level). Isoform 1: Detected in retina. Isoform 2: Detected in retina. Isoform 3: Strongly expressed in retina and testis. Isoform 4: Strongly expressed in testis, and weakly expressed in retina.

Its subcellular location is the cell projection. The protein resides in the cilium. The protein localises to the photoreceptor outer segment. It is found in the cytoplasm. It localises to the cytoskeleton. Its subcellular location is the cilium axoneme. The protein resides in the microtubule organizing center. The protein localises to the centrosome. It is found in the secreted. It localises to the extracellular space. Its subcellular location is the extracellular matrix. The protein resides in the interphotoreceptor matrix. In terms of biological role, required to maintain the integrity of photoreceptor cells. Specifically required for normal morphology of the photoreceptor ciliary pocket, and might thus facilitate protein trafficking between the photoreceptor inner and outer segments via the transition zone. The polypeptide is Protein eyes shut homolog (EYS) (Homo sapiens (Human)).